Consider the following 177-residue polypeptide: Large ribosomal subunit protein uL6 (177 aa).

This sequence belongs to the universal ribosomal protein uL6 family. Part of the 50S ribosomal subunit.

This protein binds to the 23S rRNA, and is important in its secondary structure. It is located near the subunit interface in the base of the L7/L12 stalk, and near the tRNA binding site of the peptidyltransferase center. The sequence is that of Large ribosomal subunit protein uL6 from Allorhizobium ampelinum (strain ATCC BAA-846 / DSM 112012 / S4) (Agrobacterium vitis (strain S4)).